The following is a 451-amino-acid chain: Bifunctional protein GlmU (451 aa).

The interval 1–236 (MDQTPSYSPP…YEELRGINSK (236 aa)) is pyrophosphorylase. UDP-N-acetyl-alpha-D-glucosamine contacts are provided by residues 17-20 (LAAG), Lys-31, Gln-79, 84-85 (GT), 105-107 (YGD), Gly-144, Glu-162, Asn-177, and Asn-234. Asp-107 is a binding site for Mg(2+). Residue Asn-234 participates in Mg(2+) binding. Positions 237–257 (VELAEAEATVQIVLRRKALEN) are linker. Positions 258–451 (GVTMTAPETV…EIRRQLKGSV (194 aa)) are N-acetyltransferase. Residues Arg-323 and Lys-341 each contribute to the UDP-N-acetyl-alpha-D-glucosamine site. The Proton acceptor role is filled by His-353. UDP-N-acetyl-alpha-D-glucosamine contacts are provided by Tyr-356 and Asn-367. Acetyl-CoA contacts are provided by residues Ala-370, 376–377 (NY), Ser-395, Ala-413, and Arg-430.

In the N-terminal section; belongs to the N-acetylglucosamine-1-phosphate uridyltransferase family. The protein in the C-terminal section; belongs to the transferase hexapeptide repeat family. In terms of assembly, homotrimer. It depends on Mg(2+) as a cofactor.

The protein localises to the cytoplasm. It carries out the reaction alpha-D-glucosamine 1-phosphate + acetyl-CoA = N-acetyl-alpha-D-glucosamine 1-phosphate + CoA + H(+). It catalyses the reaction N-acetyl-alpha-D-glucosamine 1-phosphate + UTP + H(+) = UDP-N-acetyl-alpha-D-glucosamine + diphosphate. It functions in the pathway nucleotide-sugar biosynthesis; UDP-N-acetyl-alpha-D-glucosamine biosynthesis; N-acetyl-alpha-D-glucosamine 1-phosphate from alpha-D-glucosamine 6-phosphate (route II): step 2/2. Its pathway is nucleotide-sugar biosynthesis; UDP-N-acetyl-alpha-D-glucosamine biosynthesis; UDP-N-acetyl-alpha-D-glucosamine from N-acetyl-alpha-D-glucosamine 1-phosphate: step 1/1. The protein operates within bacterial outer membrane biogenesis; LPS lipid A biosynthesis. In terms of biological role, catalyzes the last two sequential reactions in the de novo biosynthetic pathway for UDP-N-acetylglucosamine (UDP-GlcNAc). The C-terminal domain catalyzes the transfer of acetyl group from acetyl coenzyme A to glucosamine-1-phosphate (GlcN-1-P) to produce N-acetylglucosamine-1-phosphate (GlcNAc-1-P), which is converted into UDP-GlcNAc by the transfer of uridine 5-monophosphate (from uridine 5-triphosphate), a reaction catalyzed by the N-terminal domain. In Granulibacter bethesdensis (strain ATCC BAA-1260 / CGDNIH1), this protein is Bifunctional protein GlmU.